A 106-amino-acid polypeptide reads, in one-letter code: Putative defensin-like protein 224 (106 aa).

The signal sequence occupies residues 1-23 (MKTLSLFFTLVILISSCVSNLMA). Disulfide bonds link Cys60–Cys78, Cys64–Cys84, and Cys68–Cys86.

This sequence belongs to the DEFL family.

It localises to the secreted. The chain is Putative defensin-like protein 224 from Arabidopsis thaliana (Mouse-ear cress).